Reading from the N-terminus, the 64-residue chain is Large ribosomal subunit protein eL37 (64 aa).

Residues cysteine 20, cysteine 23, cysteine 35, and cysteine 38 each contribute to the Zn(2+) site. A C4-type zinc finger spans residues 20–38; sequence CRRCGRRAYHVRKKACAAC.

The protein belongs to the eukaryotic ribosomal protein eL37 family. Zn(2+) serves as cofactor.

Functionally, binds to the 23S rRNA. The chain is Large ribosomal subunit protein eL37 from Methanococcus vannielii (strain ATCC 35089 / DSM 1224 / JCM 13029 / OCM 148 / SB).